Here is a 130-residue protein sequence, read N- to C-terminus: KVWERCALARKLKELGMDGYRGVSLANWMCLTKWESDYNTDATNYNPSSESTDYGIFQINSRYWCNNGKTPHAVNGCGINCNVLLEDDITKAVQCAKRVVRDPQGVRAWVAWKNHCEGHDVEQYVEGCDL.

The C-type lysozyme domain occupies 1 to 130 (KVWERCALAR…VEQYVEGCDL (130 aa)). Cystine bridges form between Cys-6-Cys-128, Cys-30-Cys-116, Cys-65-Cys-81, and Cys-77-Cys-95. Catalysis depends on residues Glu-35 and Asp-53.

It belongs to the glycosyl hydrolase 22 family. As to quaternary structure, monomer.

The enzyme catalyses Hydrolysis of (1-&gt;4)-beta-linkages between N-acetylmuramic acid and N-acetyl-D-glucosamine residues in a peptidoglycan and between N-acetyl-D-glucosamine residues in chitodextrins.. Lysozymes have primarily a bacteriolytic function; those in tissues and body fluids are associated with the monocyte-macrophage system and enhance the activity of immunoagents. This chain is Lysozyme C (LYZ), found in Camelus dromedarius (Dromedary).